Reading from the N-terminus, the 112-residue chain is uncharacterized protein (112 aa).

A helical transmembrane segment spans residues 82 to 104 (IFFGFSIIASYFLKFHLLYVILL).

It localises to the membrane. This is an uncharacterized protein from Pasteurella multocida (strain Pm70).